A 170-amino-acid polypeptide reads, in one-letter code: Acetyl-CoA decarbonylase/synthase complex subunit epsilon 1 (170 aa).

Belongs to the CdhB family. Heterotetramer of two alpha and two epsilon subunits. The ACDS complex is made up of alpha, epsilon, beta, gamma and delta subunits with a probable stoichiometry of (alpha(2)epsilon(2))(4)-beta(8)-(gamma(1)delta(1))(8).

It participates in one-carbon metabolism; methanogenesis from acetate. In terms of biological role, part of a complex that catalyzes the reversible cleavage of acetyl-CoA, allowing growth on acetate as sole source of carbon and energy. The alpha-epsilon subcomponent functions as a carbon monoxide dehydrogenase. The precise role of the epsilon subunit is unclear; it may have a stabilizing role within the alpha(2)epsilon(2) component and/or be involved in electron transfer to FAD during a potential FAD-mediated CO oxidation. This chain is Acetyl-CoA decarbonylase/synthase complex subunit epsilon 1 (cdhB1), found in Methanosarcina thermophila.